Here is a 65-residue protein sequence, read N- to C-terminus: Myosin-11 (65 aa).

The Myosin motor domain occupies 1-65 (RSGKLDAFLV…NWQWWRLFTK (65 aa)).

Belongs to the TRAFAC class myosin-kinesin ATPase superfamily. Myosin family. As to quaternary structure, muscle myosin is a hexameric protein that consists of 2 heavy chain subunits (MHC), 2 alkali light chain subunits (MLC) and 2 regulatory light chain subunits (MLC-2).

The protein localises to the melanosome. Its subcellular location is the cytoplasm. It is found in the myofibril. Its function is as follows. Muscle contraction. The chain is Myosin-11 (MYH11) from Sus scrofa (Pig).